Consider the following 507-residue polypeptide: Zinc finger protein Aiolos (507 aa).

The segment at Met-1 to Met-85 is disordered. Thr-20 bears the Phosphothreonine mark. 2 positions are modified to phosphoserine: Ser-22 and Ser-42. 2 stretches are compositionally biased toward basic and acidic residues: residues Lys-33–Pro-46 and Asp-56–Met-72. Residues Lys-61, Lys-73, and Lys-100 each participate in a glycyl lysine isopeptide (Lys-Gly) (interchain with G-Cter in SUMO2) cross-link. 3 consecutive C2H2-type zinc fingers follow at residues Met-117–His-139, Phe-145–His-167, and Phe-173–His-195. A C2H2-type 4; atypical zinc finger spans residues Tyr-201–Cys-223. Residue Lys-244 forms a Glycyl lysine isopeptide (Lys-Gly) (interchain with G-Cter in SUMO2) linkage. Thr-325 carries the phosphothreonine modification. The interval Leu-370–Gln-396 is disordered. Ser-377 carries the phosphoserine modification. A C2H2-type 5 zinc finger spans residues Phe-450–His-472. Residues Phe-450–His-502 form a mediates homodimerization and heterodimerization region. The segment at Phe-478–His-502 adopts a C2H2-type 6; atypical zinc-finger fold.

It belongs to the Ikaros C2H2-type zinc-finger protein family. As to quaternary structure, homodimer. Heterodimer with other IKAROS family members. Interacts with IKZF4 and IKZF5. Interacts with HRAS. Interacts with FOXP3; this interaction may be required for silencing target genes and regulating the suppressive activity of FOXP3-positive regulatory T-cells (Treg). Interacts with BCL21L isoform Bcl-X(L); this interaction blocks the anti-apoptotic role of BCL21L. Associates with histone deacetylase complexes containing HDAC1, MTA2 and SIN3A. Interacts with IKZF1. As to expression, expression is restricted to lymphoid tissues. Expressed at highest levels in spleen and at lower levels in the thymus and bone marrow. First detected in more committed lymphoid progenitors and strongly up-regulated as these differentiate into pre-T and pre-B cell precursors.

Its subcellular location is the nucleus. It localises to the cytoplasm. Transcription factor that plays an important role in the regulation of lymphocyte differentiation. Binds to GGGAA. Plays an essential role in regulation of B-cell differentiation, proliferation and maturation to an effector state. Involved in regulating BCL2 expression and controlling apoptosis in T-cells in an IL2-dependent manner. This is Zinc finger protein Aiolos (Ikzf3) from Mus musculus (Mouse).